The following is a 116-amino-acid chain: Ribosome-binding factor A (116 aa).

It belongs to the RbfA family. As to quaternary structure, monomer. Binds 30S ribosomal subunits, but not 50S ribosomal subunits or 70S ribosomes.

The protein resides in the cytoplasm. Functionally, one of several proteins that assist in the late maturation steps of the functional core of the 30S ribosomal subunit. Associates with free 30S ribosomal subunits (but not with 30S subunits that are part of 70S ribosomes or polysomes). Required for efficient processing of 16S rRNA. May interact with the 5'-terminal helix region of 16S rRNA. The chain is Ribosome-binding factor A from Staphylococcus epidermidis (strain ATCC 35984 / DSM 28319 / BCRC 17069 / CCUG 31568 / BM 3577 / RP62A).